Here is a 187-residue protein sequence, read N- to C-terminus: ATP synthase subunit delta, chloroplastic (187 aa).

It belongs to the ATPase delta chain family. F-type ATPases have 2 components, F(1) - the catalytic core - and F(0) - the membrane proton channel. F(1) has five subunits: alpha(3), beta(3), gamma(1), delta(1), epsilon(1). CF(0) has four main subunits: a(1), b(1), b'(1) and c(10-14). The alpha and beta chains form an alternating ring which encloses part of the gamma chain. F(1) is attached to F(0) by a central stalk formed by the gamma and epsilon chains, while a peripheral stalk is formed by the delta, b and b' chains.

The protein localises to the plastid. It is found in the chloroplast thylakoid membrane. F(1)F(0) ATP synthase produces ATP from ADP in the presence of a proton or sodium gradient. F-type ATPases consist of two structural domains, F(1) containing the extramembraneous catalytic core and F(0) containing the membrane proton channel, linked together by a central stalk and a peripheral stalk. During catalysis, ATP synthesis in the catalytic domain of F(1) is coupled via a rotary mechanism of the central stalk subunits to proton translocation. Functionally, this protein is part of the stalk that links CF(0) to CF(1). It either transmits conformational changes from CF(0) to CF(1) or is implicated in proton conduction. This is ATP synthase subunit delta, chloroplastic from Trieres chinensis (Marine centric diatom).